A 116-amino-acid chain; its full sequence is MEDPSKVQLNQLTDYIMKNCLWQFHSRKWDRERQNEGILTKTKQILLGEEVDLSTPADRCYYADALCLADAYKTEYPWINDMSKDELIQLMQQLKDRIDYVTITGSLNAELTDPRY.

In terms of assembly, hexamer of two alpha, two beta, and two delta chains. Iron-sulfur cluster serves as cofactor.

The enzyme catalyses N2 + 8 reduced [2Fe-2S]-[ferredoxin] + 16 ATP + 16 H2O = H2 + 8 oxidized [2Fe-2S]-[ferredoxin] + 2 NH4(+) + 16 ADP + 16 phosphate + 6 H(+). The key enzymatic reactions in nitrogen fixation are catalyzed by the nitrogenase complex, which has 2 components: the iron protein (component 2) and a component 1 which is either a molybdenum-iron protein, a vanadium-iron, or an iron-iron protein. This chain is Nitrogenase iron-iron protein delta chain (anfG), found in Clostridium pasteurianum.